The chain runs to 120 residues: 2-amino-4-hydroxy-6-hydroxymethyldihydropteridine pyrophosphokinase (120 aa).

The protein belongs to the HPPK family.

It carries out the reaction 6-hydroxymethyl-7,8-dihydropterin + ATP = (7,8-dihydropterin-6-yl)methyl diphosphate + AMP + H(+). It participates in cofactor biosynthesis; tetrahydrofolate biosynthesis; 2-amino-4-hydroxy-6-hydroxymethyl-7,8-dihydropteridine diphosphate from 7,8-dihydroneopterin triphosphate: step 4/4. Functionally, catalyzes the transfer of pyrophosphate from adenosine triphosphate (ATP) to 6-hydroxymethyl-7,8-dihydropterin, an enzymatic step in folate biosynthesis pathway. The polypeptide is 2-amino-4-hydroxy-6-hydroxymethyldihydropteridine pyrophosphokinase (folK) (Pseudomonas putida (Arthrobacter siderocapsulatus)).